Consider the following 388-residue polypeptide: Succinate--CoA ligase [ADP-forming] subunit beta (388 aa).

One can recognise an ATP-grasp domain in the interval 9-244 (KEILRKFGVA…LDEEDPAEIE (236 aa)). ATP is bound by residues Lys46, 53–55 (GRG), Glu99, Ala102, and Glu107. Residues Asn199 and Asp213 each contribute to the Mg(2+) site. Residues Asn264 and 321–323 (GIM) contribute to the substrate site.

Belongs to the succinate/malate CoA ligase beta subunit family. In terms of assembly, heterotetramer of two alpha and two beta subunits. Requires Mg(2+) as cofactor.

The enzyme catalyses succinate + ATP + CoA = succinyl-CoA + ADP + phosphate. It catalyses the reaction GTP + succinate + CoA = succinyl-CoA + GDP + phosphate. It participates in carbohydrate metabolism; tricarboxylic acid cycle; succinate from succinyl-CoA (ligase route): step 1/1. Functionally, succinyl-CoA synthetase functions in the citric acid cycle (TCA), coupling the hydrolysis of succinyl-CoA to the synthesis of either ATP or GTP and thus represents the only step of substrate-level phosphorylation in the TCA. The beta subunit provides nucleotide specificity of the enzyme and binds the substrate succinate, while the binding sites for coenzyme A and phosphate are found in the alpha subunit. This Burkholderia ambifaria (strain MC40-6) protein is Succinate--CoA ligase [ADP-forming] subunit beta.